We begin with the raw amino-acid sequence, 23 residues long: Caerin-4.2 (23 aa).

In terms of tissue distribution, expressed by the skin parotoid and/or rostral glands.

The protein resides in the secreted. In terms of biological role, antibacterial peptide, that adopts an alpha helical conformation which can disrupt bacterial membranes. Each caerin displays a different antimicrobial specificity. In Ranoidea caerulea (Green tree frog), this protein is Caerin-4.2.